The primary structure comprises 378 residues: Cytochrome b (378 aa).

4 helical membrane-spanning segments follow: residues phenylalanine 34 to methionine 54, tryptophan 78 to valine 99, tryptophan 114 to leucine 134, and phenylalanine 179 to leucine 199. Positions 84 and 98 each coordinate heme b. Heme b contacts are provided by histidine 183 and histidine 197. Position 202 (histidine 202) interacts with a ubiquinone. The next 4 helical transmembrane spans lie at phenylalanine 227–serine 247, leucine 289–asparagine 309, isoleucine 321–alanine 341, and tyrosine 348–leucine 368.

The protein belongs to the cytochrome b family. As to quaternary structure, the main subunits of complex b-c1 are: cytochrome b, cytochrome c1 and the Rieske protein. The cofactor is heme b.

Its subcellular location is the mitochondrion inner membrane. In terms of biological role, component of the ubiquinol-cytochrome c reductase complex (complex III or cytochrome b-c1 complex) that is part of the mitochondrial respiratory chain. The b-c1 complex mediates electron transfer from ubiquinol to cytochrome c. Contributes to the generation of a proton gradient across the mitochondrial membrane that is then used for ATP synthesis. The protein is Cytochrome b (mt:Cyt-b) of Drosophila melanogaster (Fruit fly).